Here is a 112-residue protein sequence, read N- to C-terminus: DNA-directed RNA polymerases I and III subunit RPAC2 (112 aa).

This sequence belongs to the archaeal Rpo11/eukaryotic RPB11/RPC19 RNA polymerase subunit family. In terms of assembly, component of the RNA polymerase I (Pol I) and RNA polymerase III (Pol III) complexes consisting of at least 13 and 17 subunits, respectively.

It localises to the nucleus. DNA-dependent RNA polymerase catalyzes the transcription of DNA into RNA using the four ribonucleoside triphosphates as substrates. Common core component of RNA polymerases I and III which synthesize ribosomal RNA precursors and small RNAs, such as 5S rRNA and tRNAs, respectively. This chain is DNA-directed RNA polymerases I and III subunit RPAC2 (polr1d), found in Danio rerio (Zebrafish).